The sequence spans 123 residues: Large ribosomal subunit protein uL18 (123 aa).

Belongs to the universal ribosomal protein uL18 family. Part of the 50S ribosomal subunit; part of the 5S rRNA/L5/L18/L25 subcomplex. Contacts the 5S and 23S rRNAs.

Functionally, this is one of the proteins that bind and probably mediate the attachment of the 5S RNA into the large ribosomal subunit, where it forms part of the central protuberance. The chain is Large ribosomal subunit protein uL18 from Wolbachia pipientis subsp. Culex pipiens (strain wPip).